The following is a 1085-amino-acid chain: Toxin VasX (1085 aa).

The segment at 1–20 (MSNPNQAAKTGQTNDAQNPA) is disordered. A run of 4 helical transmembrane segments spans residues 753-773 (ALGE…AISA), 813-833 (IALV…ESWG), 860-880 (IIFY…PSIA), and 884-904 (AGWM…GVIL).

It localises to the secreted. Its subcellular location is the host membrane. In terms of biological role, toxin secreted by the type VI (T6SS) secretion system that acts on prokaryotic target cells. Acts in conjunction with VasW, an accessory protein to VasX, to compromise the inner membrane of prokaryotic target cells. The sequence is that of Toxin VasX from Vibrio cholerae serotype O1 (strain ATCC 39315 / El Tor Inaba N16961).